Consider the following 141-residue polypeptide: D-aminoacyl-tRNA deacylase (141 aa).

The Gly-cisPro motif, important for rejection of L-amino acids signature appears at 133-134; it reads GP.

Belongs to the DTD family. Homodimer.

The protein localises to the cytoplasm. The catalysed reaction is glycyl-tRNA(Ala) + H2O = tRNA(Ala) + glycine + H(+). The enzyme catalyses a D-aminoacyl-tRNA + H2O = a tRNA + a D-alpha-amino acid + H(+). Its function is as follows. An aminoacyl-tRNA editing enzyme that deacylates mischarged D-aminoacyl-tRNAs. Also deacylates mischarged glycyl-tRNA(Ala), protecting cells against glycine mischarging by AlaRS. Acts via tRNA-based rather than protein-based catalysis; rejects L-amino acids rather than detecting D-amino acids in the active site. By recycling D-aminoacyl-tRNA to D-amino acids and free tRNA molecules, this enzyme counteracts the toxicity associated with the formation of D-aminoacyl-tRNA entities in vivo and helps enforce protein L-homochirality. This is D-aminoacyl-tRNA deacylase from Nautilia profundicola (strain ATCC BAA-1463 / DSM 18972 / AmH).